The primary structure comprises 250 residues: MRQDGRKQNQLREVEIIPHFTKHAEGSVLISVGDTKVICTASIENRVPPFLRGQNKGWLAAEYSMLPRATGQRTIREAAKGKLSGRTMEIQRLIGRALRAVVDLEKLGEKTIWIDCDVIQADGGTRTASITGAYVALVLAVQKAFAEKTISAWPITDFLAAISVGILPEEGAVCDLCYSEDSQAKVDMNIVQTGSGDFVEVQGSGEEAVYTRSELNELLDLAAEGIDQLIHIQRPFLGEAASWIEEKKGT.

Residues Arg86 and 124 to 126 (GTR) each bind phosphate.

It belongs to the RNase PH family. As to quaternary structure, homohexameric ring arranged as a trimer of dimers.

It carries out the reaction tRNA(n+1) + phosphate = tRNA(n) + a ribonucleoside 5'-diphosphate. Phosphorolytic 3'-5' exoribonuclease that plays an important role in tRNA 3'-end maturation. Removes nucleotide residues following the 3'-CCA terminus of tRNAs; can also add nucleotides to the ends of RNA molecules by using nucleoside diphosphates as substrates, but this may not be physiologically important. Probably plays a role in initiation of 16S rRNA degradation (leading to ribosome degradation) during starvation. The protein is Ribonuclease PH of Shouchella clausii (strain KSM-K16) (Alkalihalobacillus clausii).